An 804-amino-acid polypeptide reads, in one-letter code: DNA mismatch repair protein MutS (804 aa).

ATP is bound at residue 614 to 621 (GPNMAGKS).

Belongs to the DNA mismatch repair MutS family.

This protein is involved in the repair of mismatches in DNA. It is possible that it carries out the mismatch recognition step. This protein has a weak ATPase activity. This Ehrlichia chaffeensis (strain ATCC CRL-10679 / Arkansas) protein is DNA mismatch repair protein MutS.